The chain runs to 221 residues: Thiopurine S-methyltransferase (221 aa).

W12, L47, E68, and R125 together coordinate S-adenosyl-L-methionine.

It belongs to the class I-like SAM-binding methyltransferase superfamily. TPMT family.

It is found in the cytoplasm. The enzyme catalyses S-adenosyl-L-methionine + a thiopurine = S-adenosyl-L-homocysteine + a thiopurine S-methylether.. The protein is Thiopurine S-methyltransferase of Legionella pneumophila (strain Corby).